The primary structure comprises 144 residues: MPPKKKKVTGLIKLQIQAGAANPAPPVGPALGQHGVNIMEFCKAYNAATESQRGWVIPVEITVYEDRSFTFITKTPPAAKMILKAAGVEKGSGEPHKTKVAKITRDQVREIATTKMPDLNANDLDQAEKIIAGTARSMGVTVEG.

It belongs to the universal ribosomal protein uL11 family. Part of the ribosomal stalk of the 50S ribosomal subunit. Interacts with L10 and the large rRNA to form the base of the stalk. L10 forms an elongated spine to which L12 dimers bind in a sequential fashion forming a multimeric L10(L12)X complex. One or more lysine residues are methylated.

Its function is as follows. Forms part of the ribosomal stalk which helps the ribosome interact with GTP-bound translation factors. This Streptomyces coelicolor (strain ATCC BAA-471 / A3(2) / M145) protein is Large ribosomal subunit protein uL11.